We begin with the raw amino-acid sequence, 231 residues long: 5'-methylthioadenosine/S-adenosylhomocysteine nucleosidase (231 aa).

Glu-12 functions as the Proton acceptor in the catalytic mechanism. Substrate-binding positions include Gly-78, Val-153, and 174–175 (ME). Asp-198 acts as the Proton donor in catalysis.

The protein belongs to the PNP/UDP phosphorylase family. MtnN subfamily.

The enzyme catalyses S-adenosyl-L-homocysteine + H2O = S-(5-deoxy-D-ribos-5-yl)-L-homocysteine + adenine. It carries out the reaction S-methyl-5'-thioadenosine + H2O = 5-(methylsulfanyl)-D-ribose + adenine. It catalyses the reaction 5'-deoxyadenosine + H2O = 5-deoxy-D-ribose + adenine. The protein operates within amino-acid biosynthesis; L-methionine biosynthesis via salvage pathway; S-methyl-5-thio-alpha-D-ribose 1-phosphate from S-methyl-5'-thioadenosine (hydrolase route): step 1/2. Its function is as follows. Catalyzes the irreversible cleavage of the glycosidic bond in both 5'-methylthioadenosine (MTA) and S-adenosylhomocysteine (SAH/AdoHcy) to adenine and the corresponding thioribose, 5'-methylthioribose and S-ribosylhomocysteine, respectively. Also cleaves 5'-deoxyadenosine, a toxic by-product of radical S-adenosylmethionine (SAM) enzymes, into 5-deoxyribose and adenine. This Vibrio campbellii (strain ATCC BAA-1116) protein is 5'-methylthioadenosine/S-adenosylhomocysteine nucleosidase.